The primary structure comprises 589 residues: MGVVEDTEPPLKRAKRLADEPNGFSANSSVRGSSVNSNSLGDLMARPLPSQGDDETIGSKGVIRKSEFVRIITRALYSLGYDKTGAMLEEESGISLHNSTIKLFLQQVKDGKWDQSVKTLHRIGFPDEKAVKAASFLLLEQKFLEFLKVEKIADALRTLRNEMAPLRINTKRVHELASSLISPSSFISHTTSTPGKESVNSRSKVLEELQTLLPASVIIPEKRLECLVENSLHIQRDSCVFHNTLDSDLSLYSDHQCGKHQIPSQTAQILESHTDEVWFLQFSHNGKYLASSSKDQTAIIWEISADGHISLKHTLVGHHKPVIAILWSPDDRQVLTCGAEEVIRRWDVDSGDCVHMYEKGGISPISCGWYPDGQGIIAGMTDRSICMWDLDGREKECWKGQRTQKVSDIAMTDDGKWLVSVCKDSVISLFDREATVERLIEEEDMITSFSLSNDNKYILVNLLNQEIRLWNIEGDPKIVSRYKGHKRSRFIIRSCFGGYKQAFIASGSEDSQVYIWHRSTGKLIVELPGHAGAVNCVSWSPTNLHMLASASDDGTIRIWGLDRINQQNQKKKLVQGSSSNGVIHRCNGN.

A disordered region spans residues 1–57 (MGVVEDTEPPLKRAKRLADEPNGFSANSSVRGSSVNSNSLGDLMARPLPSQGDDETI). The segment covering 25–39 (SANSSVRGSSVNSNS) has biased composition (low complexity). The region spanning 64 to 96 (RKSEFVRIITRALYSLGYDKTGAMLEEESGISL) is the LisH domain. In terms of domain architecture, CTLH spans 97-154 (HNSTIKLFLQQVKDGKWDQSVKTLHRIGFPDEKAVKAASFLLLEQKFLEFLKVEKIAD). WD repeat units lie at residues 272 to 311 (SHTD…HISL), 317 to 358 (GHHK…HMYE), 360 to 398 (GGIS…KECW), 401 to 440 (QRTQ…ERLI), 442 to 480 (EEDM…KIVS), 484 to 526 (GHKR…LIVE), and 529 to 569 (GHAG…QQNQ).

As to quaternary structure, interacts with RANBPM. As to expression, expressed in roots, leaves and flowers.

It is found in the cytoplasm. In terms of biological role, acts as a component involved in the crosstalk regulation between light, hormone and abiotic stress response. This Arabidopsis thaliana (Mouse-ear cress) protein is WD repeat-containing protein 26 homolog.